Consider the following 213-residue polypeptide: Kynurenine formamidase (213 aa).

Tryptophan 18 serves as a coordination point for substrate. Histidine 48, histidine 52, and aspartate 54 together coordinate Zn(2+). The active-site Proton donor/acceptor is histidine 58. Zn(2+) contacts are provided by histidine 160 and glutamate 172.

It belongs to the Cyclase 1 superfamily. KynB family. In terms of assembly, homodimer. Zn(2+) serves as cofactor.

It catalyses the reaction N-formyl-L-kynurenine + H2O = L-kynurenine + formate + H(+). Its pathway is amino-acid degradation; L-tryptophan degradation via kynurenine pathway; L-kynurenine from L-tryptophan: step 2/2. Catalyzes the hydrolysis of N-formyl-L-kynurenine to L-kynurenine, the second step in the kynurenine pathway of tryptophan degradation. This Burkholderia pseudomallei (strain 1106a) protein is Kynurenine formamidase.